Reading from the N-terminus, the 130-residue chain is MVMTDPIADMLTRIRNANQMSHAKVLIPASKLKLEILSVLKTEGFIKNFYLPQSSRDIIVSLKYAPNKEKVIKGLKRVSKPGLRVYATAQQIPKVLNGLGVALVSTSKGILTDSQARISQVGGEILAYVW.

The protein belongs to the universal ribosomal protein uS8 family. As to quaternary structure, part of the 30S ribosomal subunit. Contacts proteins S5 and S12.

Its function is as follows. One of the primary rRNA binding proteins, it binds directly to 16S rRNA central domain where it helps coordinate assembly of the platform of the 30S subunit. This chain is Small ribosomal subunit protein uS8, found in Phytoplasma australiense.